Reading from the N-terminus, the 428-residue chain is ETS domain-containing protein Elk-1 (428 aa).

A DNA-binding region (ETS) is located at residues 5 to 86; the sequence is VTLWQFLLQL…SGQKFVYKFV (82 aa). Disordered regions lie at residues 121-149, 165-205, and 228-358; these read AAPG…ARSS, QSLQ…SPLE, and NLKS…SLLP. Low complexity predominate over residues 177-205; the sequence is PAVVLPSAAPAGAAAPPSGSRSTSPSPLE. Glycyl lysine isopeptide (Lys-Gly) (interchain with G-Cter in SUMO) cross-links involve residues Lys-230, Lys-249, and Lys-254. Residues 248 to 261 are compositionally biased toward basic and acidic residues; it reads VKVEGPKEELEVAG. Ser-324 carries the phosphoserine; by MAPK1 modification. Phosphothreonine; by MAPK1 is present on residues Thr-336, Thr-353, Thr-363, and Thr-368. Positions 349–399 are sufficient for interaction with MAD2L2; it reads GPALTPSLLPTHTLTPVLLTPSSLPPSIHFWSTLSPIAPRSPAKLSFQFPS. The O-linked (GlcNAc) threonine glycan is linked to Thr-381. Ser-383 bears the Phosphoserine; by MAPK1 and MAPK8 mark. Residue Ser-389 is modified to Phosphoserine; by MAPK1. Thr-417 is modified (phosphothreonine; by MAPK1). Residue Ser-422 is modified to Phosphoserine; by MAPK1.

It belongs to the ETS family. In terms of assembly, interacts in its sumoylated form with PIAS2/PIASX which enhances its transcriptional activator activity. Interacts with MAD2L2; the interaction is direct and promotes phosphorylation by the kinases MAPK8 and/or MAPK9. Interacts with POU1F1. In terms of processing, sumoylation represses transcriptional activator activity as it results in recruitment of HDAC2 to target gene promoters which leads to decreased histone acetylation and reduced transactivator activity. It also regulates nuclear retention. On mitogenic stimulation, phosphorylated on C-terminal serine and threonine residues by MAPK1. Ser-383 and Ser-389 are the preferred sites for MAPK1. In vitro, phosphorylation by MAPK1 potentiates ternary complex formation with the serum responses factors, SRE and SRF. Also phosphorylated on Ser-383 by MAPK8 and/or MAKP9. Phosphorylation leads to loss of sumoylation and restores transcriptional activator activity. Phosphorylated and activated by CAMK4, MAPK11, MAPK12 and MAPK14. Upon bFGF stimulus, phosphorylated by PAK1. Phosphorylated by PRP4K at Thr-417; phosphorylation activation ELK1 transcriptional activity. In terms of tissue distribution, lung and testis.

The protein resides in the nucleus. In terms of biological role, transcription factor that binds to purine-rich DNA sequences. Forms a ternary complex with SRF and the ETS and SRF motifs of the serum response element (SRE) on the promoter region of immediate early genes such as FOS and IER2. Induces target gene transcription upon JNK and MAPK-signaling pathways stimulation. The protein is ETS domain-containing protein Elk-1 of Homo sapiens (Human).